The following is a 445-amino-acid chain: Tripartite motif-containing protein 43B (445 aa).

An RING-type zinc finger spans residues 16 to 57 (CSICQGIFMNPVYLKCGHKFCEACLLLFQEDIKFPAYCPMCM). Residues 88–129 (SEEHKCVTHKAKKMIFCDKSKILLCHLCSDSQEHSGHTHCSI) form a B box-type zinc finger. 4 residues coordinate Zn(2+): Cys-93, His-96, Cys-115, and His-121. One can recognise a B30.2/SPRY domain in the interval 271–445 (RLRAHSIPGL…VRPFFSAVYT (175 aa)).

Belongs to the TRIM/RBCC family.

The sequence is that of Tripartite motif-containing protein 43B from Mus musculus (Mouse).